Consider the following 307-residue polypeptide: Probable RuBisCO transcriptional regulator (307 aa).

An HTH lysR-type domain is found at 5 to 62 (FTLQQLRIFKAIASEKSFTQAAEILFVSQPSLSKQIKTLENRLGILLLNRTGNKILLT). Positions 22 to 41 (FTQAAEILFVSQPSLSKQIK) form a DNA-binding region, H-T-H motif.

This sequence belongs to the LysR transcriptional regulatory family.

The protein localises to the plastid. It is found in the chloroplast. In terms of biological role, trans-acting transcriptional regulator of RuBisCO genes (rbcL and rbcS) expression. This Thalassiosira pseudonana (Marine diatom) protein is Probable RuBisCO transcriptional regulator (rbcR-A).